A 128-amino-acid chain; its full sequence is Sulfurtransferase TusD (128 aa).

Catalysis depends on Cys-78, which acts as the Cysteine persulfide intermediate.

The protein belongs to the DsrE/TusD family. In terms of assembly, heterohexamer, formed by a dimer of trimers. The hexameric TusBCD complex contains 2 copies each of TusB, TusC and TusD. The TusBCD complex interacts with TusE.

The protein resides in the cytoplasm. In terms of biological role, part of a sulfur-relay system required for 2-thiolation of 5-methylaminomethyl-2-thiouridine (mnm(5)s(2)U) at tRNA wobble positions. Accepts sulfur from TusA and transfers it in turn to TusE. The polypeptide is Sulfurtransferase TusD (Escherichia coli O17:K52:H18 (strain UMN026 / ExPEC)).